A 145-amino-acid polypeptide reads, in one-letter code: Maximins 3/H3 type 2 (145 aa).

A signal peptide spans 1 to 18 (MNFKYIVAVSFLIASAYA). Propeptides lie at residues 19-43 (RSVQ…LREI) and 74-124 (RTAE…KEKR). Ile-144 carries the isoleucine amide modification.

The protein belongs to the bombinin family. Expressed by the skin glands.

It is found in the secreted. Functionally, maximin-3 shows antibacterial activity against both Gram-positive and Gram-negative bacteria. It also shows antimicrobial activity against the fungus C.albicans, but not against A.flavus nor P.uticale. It has little hemolytic activity. It possess a significant cytotoxicity against tumor cell lines. It possess a significant anti-HIV activity. It shows high spermicidal activity. Its function is as follows. Maximin-H3 shows antibacterial activity against both Gram-positive and Gram-negative bacteria. It also shows antimicrobial activity against the fungus C.albicans. Shows strong hemolytic activity. The polypeptide is Maximins 3/H3 type 2 (Bombina maxima (Giant fire-bellied toad)).